We begin with the raw amino-acid sequence, 380 residues long: Glucose-1-phosphate adenylyltransferase (380 aa).

Residues Tyr99, Gly164, 179 to 180 (EK), and Ser190 each bind alpha-D-glucose 1-phosphate.

The protein belongs to the bacterial/plant glucose-1-phosphate adenylyltransferase family. Homotetramer.

It catalyses the reaction alpha-D-glucose 1-phosphate + ATP + H(+) = ADP-alpha-D-glucose + diphosphate. It participates in glycan biosynthesis; glycogen biosynthesis. Functionally, involved in the biosynthesis of ADP-glucose, a building block required for the elongation reactions to produce glycogen. Catalyzes the reaction between ATP and alpha-D-glucose 1-phosphate (G1P) to produce pyrophosphate and ADP-Glc. This is Glucose-1-phosphate adenylyltransferase from Bacillus subtilis (strain 168).